Here is a 149-residue protein sequence, read N- to C-terminus: Large ribosomal subunit protein bL9 (149 aa).

Belongs to the bacterial ribosomal protein bL9 family.

In terms of biological role, binds to the 23S rRNA. This is Large ribosomal subunit protein bL9 from Xylella fastidiosa (strain M23).